A 962-amino-acid chain; its full sequence is Integrator complex subunit 7 (962 aa).

Phosphoserine occurs at positions 338 and 809.

Belongs to the Integrator subunit 7 family. In terms of assembly, component of the Integrator complex, composed of core subunits INTS1, INTS2, INTS3, INTS4, INTS5, INTS6, INTS7, INTS8, INTS9/RC74, INTS10, INTS11/CPSF3L, INTS12, INTS13, INTS14 and INTS15. The core complex associates with protein phosphatase 2A subunits PPP2CA and PPP2R1A, to form the Integrator-PP2A (INTAC) complex. Interacts with NABP2.

Its subcellular location is the nucleus. It localises to the chromosome. It is found in the cytoplasm. Its function is as follows. Component of the integrator complex, a multiprotein complex that terminates RNA polymerase II (Pol II) transcription in the promoter-proximal region of genes. The integrator complex provides a quality checkpoint during transcription elongation by driving premature transcription termination of transcripts that are unfavorably configured for transcriptional elongation: the complex terminates transcription by (1) catalyzing dephosphorylation of the C-terminal domain (CTD) of Pol II subunit POLR2A/RPB1 and SUPT5H/SPT5, (2) degrading the exiting nascent RNA transcript via endonuclease activity and (3) promoting the release of Pol II from bound DNA. The integrator complex is also involved in terminating the synthesis of non-coding Pol II transcripts, such as enhancer RNAs (eRNAs), small nuclear RNAs (snRNAs), telomerase RNAs and long non-coding RNAs (lncRNAs). May be not involved in the recruitment of cytoplasmic dynein to the nuclear envelope by different components of the INT complex. Plays a role in DNA damage response (DDR) signaling during the S phase. In Homo sapiens (Human), this protein is Integrator complex subunit 7.